The chain runs to 782 residues: E3 UFM1-protein ligase 1 homolog (782 aa).

The disordered stretch occupies residues 404 to 477; that stretch reads NASTQELEDD…GSRGGGGVNK (74 aa). Positions 443 to 453 are enriched in basic residues; the sequence is KSTKKHQRGKA.

This sequence belongs to the UFL1 family.

Its function is as follows. E3 UFM1-protein ligase that mediates ufmylation of target proteins. The chain is E3 UFM1-protein ligase 1 homolog from Drosophila erecta (Fruit fly).